The primary structure comprises 1613 residues: MLPLIGKTIIFDNFPDPSDTWEIIETIGKGTYGKVFKVLNKKSGQKAAVKILDPIHDIDEEIEAEYNILRTLSDHPNVVRFYGIYFKKDKINGDKLWLVLELCNGGSVTDLVKGFLKRGERMSEPVIAYILHEALMGLQHLHSNKTIHRDVKGNNILLTTEGGVKLVDFGVSAQLSSTRHRLNTSVGTPFWMAPEVIACEQQLDTTYDARCDTWSLGITAIELGDGDPPLAELHPMRALFKIPRNPPPKLRQPELWSAEFNDFISKCLTKDYEKRPTVSDLLKHKFITQIEGKDVILQKQLMEFIDIHQCLGSTEKARHERIHTKKGNLNRSLISSLKDVDDLATLDVLDEPTASPHLHPCHSRDQIHIHVADILIALNPFQSLGIYSPKLSRLYIGAKRTANPPHIFAMADLGYQSMVTYNADQCIVISGESGAGKTESAHLLVQQLTVLGKANNRTLQEKILQMNNLVEAFGNACTIINDNSSRFGKYLEMKFTSSGAVVGAQISEYLLEKSRVIHQAMGEKNFHIFYYIYGGLAEKKKLALYKSPEHKPPRYLQNDNLRTVQDMMNNSFYKSQYELIEQCFKVIGFTMEQLASVYSVLAAILNVGNIEFSSVATEYQMDKSYICNHTALENCASLLCIQADELQEALTSHCVVTRGETIIRPNTVEKAADVRDAMAKTLYGRLFSCIVNCINSLLKHDTSPSGDEELNIGILDIFGFENFKRNSFEQLCINIANEQIQYYFNQHVFAWEQNEYLNEDVDARVIEYEDNRPLLDMFLQKPMGLLSLLDEESRFPKATDQTLIEKFEDNLKSQYFWRPKRMELSFGIHHYAGKVLYSASGFLAKNRDTFPTDIVLPLRSSENSVIRQLVNHPLTKTGNLPLSKTKNIVNYQMWNSEKSTNLTKGETRDVTCHACETTNVKTQTVSSYFRYSLMDLLSKMVVGQPHFVRCIKPNNERQARKYDKEKVLLQLRCTGILETARIRRLGYSHRILFANFIKRYYILCYKSSEEPPVSPDTCAAILEKAGLDNWALGKTKVFLKYYHVEQLNLMRKEATNKLVLIQASVRAFLGARRYQELQQKRKSSAVIIQSAARGHLVRKQRKEIVDMKNTAVTTIQTSDQEFDYKKNFENTRESFVKKQTENAVPTNESNTSTPNNKESPSAGKTAPFIAESKATNVESNNRRYHTQKKMSNVYAEGQNQELYIVEDTWAEVSPRQKYVQDLEESRKMRKEEKGDAVIQSYCQWYTEGSNFEESKATCLEGRETWERTSCPGLWLTEEIYLRKTLDPTLSQKSVYQNADGKEKEHKVSVVTQNAPLGNLERDYHLLGFLGEEDTGPVPQAQEEHKAVSIHSKYQSSKKKQQLGKDRLAPPFKNQKILSSSTEVAKTTHNVYPCPTKQEGVHHSKMVDERDSKMASKKEAWDLAMFSRQISKLSEEYFILQKNLNEIILAQQLKPFYLGIYRHKPINRHVSTHQYLSGVSKGEEPKILRPPRRPRKPKTLNNPEDSTYYYLLHKSTQEEKRRPGKDSQGKLLGLEDFYYKEFLPTHYGPKAHSSNAREWKALKEPQAQPIESNERCWTTSENESLEEERISANPYDYRRLLRKTSQRQRLVQQL.

The region spanning 21–287 (WEIIETIGKG…VSDLLKHKFI (267 aa)) is the Protein kinase domain. ATP is bound by residues 27–35 (IGKGTYGKV) and K50. The active-site Proton acceptor is D150. The Myosin motor domain maps to 338–1052 (KDVDDLATLD…HVEQLNLMRK (715 aa)). An actin-binding region spans residues 933–955 (LMDLLSKMVVGQPHFVRCIKPNN). IQ domains are found at residues 1054–1083 (ATNKLVLIQASVRAFLGARRYQELQQKRKS) and 1081–1110 (RKSSAVIIQSAARGHLVRKQRKEIVDMKNT). Disordered regions lie at residues 1136 to 1168 (VKKQTENAVPTNESNTSTPNNKESPSAGKTAPF) and 1476 to 1506 (SGVSKGEEPKILRPPRRPRKPKTLNNPEDST). The segment covering 1145 to 1161 (PTNESNTSTPNNKESPS) has biased composition (low complexity). The interval 1398-1476 (EGVHHSKMVD…RHVSTHQYLS (79 aa)) is interaction with MORN4. Residues 1488–1497 (RPPRRPRKPK) are compositionally biased toward basic residues.

In the C-terminal section; belongs to the TRAFAC class myosin-kinesin ATPase superfamily. Myosin family. This sequence in the N-terminal section; belongs to the protein kinase superfamily. STE Ser/Thr protein kinase family. Interacts with MORN4. Interacts (via C-terminus) with ESPN and ESPNL. Expressed in the cochlear hair cells (at protein level). Expressed in utricle hair bundles (at protein level).

Its subcellular location is the cytoplasm. It localises to the cytoskeleton. It is found in the cell projection. The protein resides in the filopodium tip. The protein localises to the stereocilium. It catalyses the reaction L-seryl-[protein] + ATP = O-phospho-L-seryl-[protein] + ADP + H(+). The catalysed reaction is L-threonyl-[protein] + ATP = O-phospho-L-threonyl-[protein] + ADP + H(+). The enzyme catalyses ATP + H2O = ADP + phosphate + H(+). In terms of biological role, actin-dependent motor protein with a protein kinase activity, playing an essential role in hearing. Probably plays also a role in vision. Required for normal cochlear hair bundle development and hearing. Plays an important role in the early steps of cochlear hair bundle morphogenesis. Influences the number and lengths of stereocilia to be produced and limits the growth of microvilli within the forming auditory hair bundles thereby contributing to the architecture of the hair bundle, including its staircase pattern. Involved in the elongation of actin in stereocilia tips by transporting the actin regulatory factor ESPN to the plus ends of actin filaments. The protein is Myosin-IIIa (Myo3a) of Mus musculus (Mouse).